We begin with the raw amino-acid sequence, 320 residues long: tRNA-cytidine(32) 2-sulfurtransferase (320 aa).

Positions 54–59 (SGGKDS) match the PP-loop motif motif. Residues Cys129, Cys132, and Cys220 each contribute to the [4Fe-4S] cluster site.

Belongs to the TtcA family. In terms of assembly, homodimer. Mg(2+) is required as a cofactor. The cofactor is [4Fe-4S] cluster.

It is found in the cytoplasm. It carries out the reaction cytidine(32) in tRNA + S-sulfanyl-L-cysteinyl-[cysteine desulfurase] + AH2 + ATP = 2-thiocytidine(32) in tRNA + L-cysteinyl-[cysteine desulfurase] + A + AMP + diphosphate + H(+). It participates in tRNA modification. Functionally, catalyzes the ATP-dependent 2-thiolation of cytidine in position 32 of tRNA, to form 2-thiocytidine (s(2)C32). The sulfur atoms are provided by the cysteine/cysteine desulfurase (IscS) system. This Bordetella pertussis (strain Tohama I / ATCC BAA-589 / NCTC 13251) protein is tRNA-cytidine(32) 2-sulfurtransferase.